A 196-amino-acid chain; its full sequence is Guanylate kinase (196 aa).

Positions 8–189 (GKIIIISGPS…AADKLRHILY (182 aa)) constitute a Guanylate kinase-like domain. 15-22 (GPSGVGKK) serves as a coordination point for ATP.

It belongs to the guanylate kinase family.

Its subcellular location is the cytoplasm. It carries out the reaction GMP + ATP = GDP + ADP. Essential for recycling GMP and indirectly, cGMP. The protein is Guanylate kinase of Malacoplasma penetrans (strain HF-2) (Mycoplasma penetrans).